An 80-amino-acid chain; its full sequence is Toxin Acra I-2 (80 aa).

The N-terminal stretch at 1-22 (MMKLALFSIIVILFSLIGSIHG) is a signal peptide. One can recognise an LCN-type CS-alpha/beta domain in the interval 25–80 (VPGNYPLDSSGNKYPCTVLGDNQSCIDVCKKHGVKYGYCYSFKCWCEFLEDKNVSI). 3 disulfide bridges follow: Cys40/Cys63, Cys49/Cys68, and Cys53/Cys70.

Expressed by the venom gland.

The protein localises to the secreted. Probable neurotoxin that inhibits ion channels. Is toxic to mice. Is about 2.8% of the total protein in the venom. The polypeptide is Toxin Acra I-2 (Androctonus crassicauda (Arabian fat-tailed scorpion)).